The sequence spans 570 residues: MSEKHPGPLVVEGKLTDAERMKLESNYLRGTIAEDLNDGLTGGFKGDNFLLIRFHGMYQQDDRDIRAERAEQKLEPHHAMLLRCRLPGGVITTKQWQAIDKFAGENTIYGSIRLTNRQTFQFHGILKKNVKPVHQMLHSVGLDALATANDMNRNVLCTSNPYESQLHAEAYEWAKKISEHLLPRTRAYAEIWLDQEKVATTDEEPILGQTYLPRKFKTTVVIPPQNDIDLHANDMNFVAIAENGKLVGFNLLVGGGLSIEHGNKKTYARTASEFGYLPLEHTLAVAEAVVTTQRDWGNRTDRKNAKTKYTLERVGVETFKAEVERRAGIKFEPIRPYEFTGRGDRIGWVKGIDDNWHLTLFIENGRILDYPGRPLKTGLLEIAKIHKGDFRITANQNLIIAGVPESEKAKIEKIAKESGLMNAVTPQRENSMACVSFPTCPLAMAEAERFLPSFIDNIDNLMAKHGVSDEHIVMRVTGCPNGCGRAMLAEVGLVGKAPGRYNLHLGGNRIGTRIPRMYKENITEPEILASLDELIGRWAKEREAGEGFGDFTVRAGIIRPVLDPARDLWD.

[4Fe-4S] cluster contacts are provided by Cys434, Cys440, Cys479, and Cys483. Cys483 is a binding site for siroheme.

Belongs to the nitrite and sulfite reductase 4Fe-4S domain family. In terms of assembly, alpha(8)-beta(8). The alpha component is a flavoprotein, the beta component is a hemoprotein. Siroheme serves as cofactor. It depends on [4Fe-4S] cluster as a cofactor.

The catalysed reaction is hydrogen sulfide + 3 NADP(+) + 3 H2O = sulfite + 3 NADPH + 4 H(+). Its pathway is sulfur metabolism; hydrogen sulfide biosynthesis; hydrogen sulfide from sulfite (NADPH route): step 1/1. Functionally, component of the sulfite reductase complex that catalyzes the 6-electron reduction of sulfite to sulfide. This is one of several activities required for the biosynthesis of L-cysteine from sulfate. The chain is Sulfite reductase [NADPH] hemoprotein beta-component from Shigella boydii serotype 4 (strain Sb227).